Reading from the N-terminus, the 308-residue chain is Aspartate carbamoyltransferase catalytic subunit (308 aa).

Residues Arg55 and Thr56 each contribute to the carbamoyl phosphate site. An L-aspartate-binding site is contributed by Lys83. Carbamoyl phosphate contacts are provided by Arg105, His133, and Gln136. L-aspartate is bound by residues Arg166 and Arg220. Positions 261 and 262 each coordinate carbamoyl phosphate.

The protein belongs to the aspartate/ornithine carbamoyltransferase superfamily. ATCase family. As to quaternary structure, heterododecamer (2C3:3R2) of six catalytic PyrB chains organized as two trimers (C3), and six regulatory PyrI chains organized as three dimers (R2).

It catalyses the reaction carbamoyl phosphate + L-aspartate = N-carbamoyl-L-aspartate + phosphate + H(+). It participates in pyrimidine metabolism; UMP biosynthesis via de novo pathway; (S)-dihydroorotate from bicarbonate: step 2/3. Its function is as follows. Catalyzes the condensation of carbamoyl phosphate and aspartate to form carbamoyl aspartate and inorganic phosphate, the committed step in the de novo pyrimidine nucleotide biosynthesis pathway. The sequence is that of Aspartate carbamoyltransferase catalytic subunit from Chlorobium limicola (strain DSM 245 / NBRC 103803 / 6330).